A 99-amino-acid chain; its full sequence is UPF0235 protein Neut_2146 (99 aa).

Belongs to the UPF0235 family.

The protein is UPF0235 protein Neut_2146 of Nitrosomonas eutropha (strain DSM 101675 / C91 / Nm57).